The following is a 382-amino-acid chain: V-type proton ATPase subunit C 1 (382 aa).

At Thr-2 the chain carries N-acetylthreonine.

The protein belongs to the V-ATPase C subunit family. As to quaternary structure, V-ATPase is a heteromultimeric enzyme made up of two complexes: the ATP-hydrolytic V1 complex and the proton translocation V0 complex. The V1 complex consists of three catalytic AB heterodimers that form a heterohexamer, three peripheral stalks each consisting of EG heterodimers, one central rotor including subunits D and F, and the regulatory subunits C and H. The proton translocation complex V0 consists of the proton transport subunit a, a ring of proteolipid subunits c9c'', rotary subunit d, subunits e and f, and the accessory subunits ATP6AP1/Ac45 and ATP6AP2/PRR. Expressed in brain (at protein level).

Its subcellular location is the cytoplasmic vesicle. The protein resides in the secretory vesicle. It localises to the synaptic vesicle membrane. It is found in the clathrin-coated vesicle membrane. Subunit of the V1 complex of vacuolar(H+)-ATPase (V-ATPase), a multisubunit enzyme composed of a peripheral complex (V1) that hydrolyzes ATP and a membrane integral complex (V0) that translocates protons. V-ATPase is responsible for acidifying and maintaining the pH of intracellular compartments and in some cell types, is targeted to the plasma membrane, where it is responsible for acidifying the extracellular environment. Subunit C is necessary for the assembly of the catalytic sector of the enzyme and is likely to have a specific function in its catalytic activity. The chain is V-type proton ATPase subunit C 1 (ATP6V1C1) from Bos taurus (Bovine).